The following is a 401-amino-acid chain: Probable tRNA sulfurtransferase (401 aa).

The THUMP domain maps to 60 to 165 (EPIIDKLKTV…QDGTYVTCHD (106 aa)). Residues 183–184 (ML), 208–209 (HF), Arg-265, Gly-287, and Gln-296 each bind ATP.

This sequence belongs to the ThiI family.

It is found in the cytoplasm. The catalysed reaction is [ThiI sulfur-carrier protein]-S-sulfanyl-L-cysteine + a uridine in tRNA + 2 reduced [2Fe-2S]-[ferredoxin] + ATP + H(+) = [ThiI sulfur-carrier protein]-L-cysteine + a 4-thiouridine in tRNA + 2 oxidized [2Fe-2S]-[ferredoxin] + AMP + diphosphate. It carries out the reaction [ThiS sulfur-carrier protein]-C-terminal Gly-Gly-AMP + S-sulfanyl-L-cysteinyl-[cysteine desulfurase] + AH2 = [ThiS sulfur-carrier protein]-C-terminal-Gly-aminoethanethioate + L-cysteinyl-[cysteine desulfurase] + A + AMP + 2 H(+). It functions in the pathway cofactor biosynthesis; thiamine diphosphate biosynthesis. Functionally, catalyzes the ATP-dependent transfer of a sulfur to tRNA to produce 4-thiouridine in position 8 of tRNAs, which functions as a near-UV photosensor. Also catalyzes the transfer of sulfur to the sulfur carrier protein ThiS, forming ThiS-thiocarboxylate. This is a step in the synthesis of thiazole, in the thiamine biosynthesis pathway. The sulfur is donated as persulfide by IscS. This Geobacillus thermodenitrificans (strain NG80-2) protein is Probable tRNA sulfurtransferase.